A 193-amino-acid polypeptide reads, in one-letter code: Protein D5 (193 aa).

Repression of replication initiation (possible). The polypeptide is Protein D5 (ddpE) (Dictyostelium discoideum (Social amoeba)).